A 429-amino-acid chain; its full sequence is 3-isopropylmalate dehydratase large subunit (429 aa).

Residues cysteine 303, cysteine 363, and cysteine 366 each contribute to the [4Fe-4S] cluster site.

The protein belongs to the aconitase/IPM isomerase family. LeuC type 2 subfamily. As to quaternary structure, heterodimer of LeuC and LeuD. [4Fe-4S] cluster is required as a cofactor.

The catalysed reaction is (2R,3S)-3-isopropylmalate = (2S)-2-isopropylmalate. It functions in the pathway amino-acid biosynthesis; L-leucine biosynthesis; L-leucine from 3-methyl-2-oxobutanoate: step 2/4. In terms of biological role, catalyzes the isomerization between 2-isopropylmalate and 3-isopropylmalate, via the formation of 2-isopropylmaleate. In Caldicellulosiruptor saccharolyticus (strain ATCC 43494 / DSM 8903 / Tp8T 6331), this protein is 3-isopropylmalate dehydratase large subunit.